Reading from the N-terminus, the 263-residue chain is Neurogenin-2 (263 aa).

The segment at 20 to 76 (LGSASPASATLTPMSSSADEEEDEELRRPGSARGQRGAEAEQGVQGSPASGAGGCRP) is disordered. Residues 24 to 36 (SPASATLTPMSSS) are compositionally biased toward polar residues. A bHLH domain is found at 112 to 164 (TRRLKANNRERNRMHNLNAALDALREVLPTFPEDAKLTKIETLRFAHNYIWAL). Residues 197–231 (LGASGDSPSPPSSWSCTNSPASSSNSTSPYSCTLS) show a composition bias toward low complexity. The disordered stretch occupies residues 197–253 (LGASGDSPSPPSSWSCTNSPASSSNSTSPYSCTLSPASPGSDVDYWQPPPPEKHRYA).

As to quaternary structure, efficient DNA binding requires dimerization with another bHLH protein.

It localises to the nucleus. Its function is as follows. Transcriptional regulator. Involved in neuronal differentiation. Activates transcription by binding to the E box (5'-CANNTG-3'). The polypeptide is Neurogenin-2 (Neurog2) (Mus musculus (Mouse)).